A 263-amino-acid polypeptide reads, in one-letter code: Methylesterase 3 (263 aa).

The active-site Acyl-ester intermediate is the serine 85. Catalysis depends on charge relay system residues aspartate 213 and histidine 241.

This sequence belongs to the AB hydrolase superfamily. Methylesterase family.

The enzyme catalyses methyl (indol-3-yl)acetate + H2O = (indol-3-yl)acetate + methanol + H(+). It catalyses the reaction methyl (-)-jasmonate + H2O = jasmonate + methanol + H(+). The protein operates within plant hormone biosynthesis. Its pathway is lipid metabolism; oxylipin biosynthesis. Methylesterase shown to have carboxylesterase activity, methyl indole-3-acetic acid (MeIAA) esterase activity and methyl jasmonate (MeJA) esterase activity in vitro. The sequence is that of Methylesterase 3 from Arabidopsis thaliana (Mouse-ear cress).